Consider the following 1326-residue polypeptide: Probable serine/threonine-protein kinase gdt8 (1326 aa).

The first 22 residues, 1 to 22, serve as a signal peptide directing secretion; that stretch reads MINKILIKLITIIIFCFSFLFA. Topologically, residues 23–782 are extracellular; it reads EEDLIRTPPG…VDRNENLELK (760 aa). 2 disordered regions span residues 419-467 and 731-762; these read VDQN…GNQG and EPPTETPTETPTETPTETPTDTPTQTPTQTPI. 2 stretches are compositionally biased toward low complexity: residues 422–460 and 731–761; these read NNNNNNNNNNNNNNNNNNNNNNNNNNNNNNNNNNNNNNN and EPPTETPTETPTETPTETPTDTPTQTPTQTP. Residues 783–803 traverse the membrane as a helical segment; that stretch reads IALPICLSLALLIGIIIMICI. The Cytoplasmic portion of the chain corresponds to 804–1326; that stretch reads FKKVQSNSKL…TKEDKDLDEN (523 aa). The disordered stretch occupies residues 833-858; that stretch reads IVSQPPTVIEEKPQDNSKPDDQKLIE. A compositionally biased stretch (basic and acidic residues) spans 841-858; sequence IEEKPQDNSKPDDQKLIE. Residues 1036-1292 enclose the Protein kinase domain; that stretch reads IKTEQLIASY…FSEISLHLEI (257 aa). ATP contacts are provided by residues 1042 to 1050 and Lys-1065; that span reads IASYLPSKV. Asp-1158 serves as the catalytic Proton acceptor. A disordered region spans residues 1301 to 1326; the sequence is MNESEESTSNHNTNSKTKEDKDLDEN. Residues 1316 to 1326 are compositionally biased toward basic and acidic residues; it reads KTKEDKDLDEN.

This sequence in the N-terminal section; belongs to the GDT family. The protein in the C-terminal section; belongs to the protein kinase superfamily. TKL Ser/Thr protein kinase family.

The protein resides in the membrane. It catalyses the reaction L-seryl-[protein] + ATP = O-phospho-L-seryl-[protein] + ADP + H(+). It carries out the reaction L-threonyl-[protein] + ATP = O-phospho-L-threonyl-[protein] + ADP + H(+). The chain is Probable serine/threonine-protein kinase gdt8 (gdt8) from Dictyostelium discoideum (Social amoeba).